The sequence spans 288 residues: Energy-coupling factor transporter ATP-binding protein EcfA2 (288 aa).

In terms of domain architecture, ABC transporter spans 3-243 (IVFEAVSHIY…RAELEAIGLG (241 aa)). 40-47 (GPTGSGKS) is an ATP binding site.

It belongs to the ABC transporter superfamily. Energy-coupling factor EcfA family. Forms a stable energy-coupling factor (ECF) transporter complex composed of 2 membrane-embedded substrate-binding proteins (S component), 2 ATP-binding proteins (A component) and 2 transmembrane proteins (T component).

It is found in the cell membrane. Functionally, ATP-binding (A) component of a common energy-coupling factor (ECF) ABC-transporter complex. Unlike classic ABC transporters this ECF transporter provides the energy necessary to transport a number of different substrates. The sequence is that of Energy-coupling factor transporter ATP-binding protein EcfA2 from Symbiobacterium thermophilum (strain DSM 24528 / JCM 14929 / IAM 14863 / T).